The sequence spans 212 residues: Phosphatidylserine decarboxylase proenzyme (212 aa).

The active-site Schiff-base intermediate with substrate; via pyruvic acid is S182. Position 182 is a pyruvic acid (Ser); by autocatalysis (S182).

This sequence belongs to the phosphatidylserine decarboxylase family. PSD-A subfamily. As to quaternary structure, heterodimer of a large membrane-associated beta subunit and a small pyruvoyl-containing alpha subunit. Pyruvate serves as cofactor. Post-translationally, is synthesized initially as an inactive proenzyme. Formation of the active enzyme involves a self-maturation process in which the active site pyruvoyl group is generated from an internal serine residue via an autocatalytic post-translational modification. Two non-identical subunits are generated from the proenzyme in this reaction, and the pyruvate is formed at the N-terminus of the alpha chain, which is derived from the carboxyl end of the proenzyme. The post-translation cleavage follows an unusual pathway, termed non-hydrolytic serinolysis, in which the side chain hydroxyl group of the serine supplies its oxygen atom to form the C-terminus of the beta chain, while the remainder of the serine residue undergoes an oxidative deamination to produce ammonia and the pyruvoyl prosthetic group on the alpha chain.

It is found in the cell membrane. It catalyses the reaction a 1,2-diacyl-sn-glycero-3-phospho-L-serine + H(+) = a 1,2-diacyl-sn-glycero-3-phosphoethanolamine + CO2. The protein operates within phospholipid metabolism; phosphatidylethanolamine biosynthesis; phosphatidylethanolamine from CDP-diacylglycerol: step 2/2. Functionally, catalyzes the formation of phosphatidylethanolamine (PtdEtn) from phosphatidylserine (PtdSer). The chain is Phosphatidylserine decarboxylase proenzyme from Pelodictyon phaeoclathratiforme (strain DSM 5477 / BU-1).